A 246-amino-acid chain; its full sequence is Pyruvate formate-lyase 1-activating enzyme (246 aa).

The region spanning 16–239 (VDGPGIRFIT…MERVKGILEQ (224 aa)) is the Radical SAM core domain. Residues C30, C34, and C37 each contribute to the [4Fe-4S] cluster site. Residues 36 to 38 (YCH), G79, 130 to 132 (DLK), and H203 contribute to the S-adenosyl-L-methionine site.

This sequence belongs to the organic radical-activating enzymes family. [4Fe-4S] cluster serves as cofactor.

It localises to the cytoplasm. It carries out the reaction glycyl-[formate C-acetyltransferase] + reduced [flavodoxin] + S-adenosyl-L-methionine = glycin-2-yl radical-[formate C-acetyltransferase] + semiquinone [flavodoxin] + 5'-deoxyadenosine + L-methionine + H(+). Functionally, activation of pyruvate formate-lyase 1 under anaerobic conditions by generation of an organic free radical, using S-adenosylmethionine and reduced flavodoxin as cosubstrates to produce 5'-deoxy-adenosine. In Escherichia coli O157:H7, this protein is Pyruvate formate-lyase 1-activating enzyme (pflA).